A 313-amino-acid polypeptide reads, in one-letter code: Protoheme IX farnesyltransferase (313 aa).

Transmembrane regions (helical) follow at residues 23-43 (ILAY…VTTI), 56-76 (PLLI…ANTL), 107-127 (LIFG…TANL), 128-148 (LSGL…TLVL), 155-175 (NVVW…SAVT), 182-202 (ALVM…ALAM), 243-263 (LALA…VWFL), and 291-311 (YLAV…PTLF).

It belongs to the UbiA prenyltransferase family. Protoheme IX farnesyltransferase subfamily.

It is found in the cell membrane. The enzyme catalyses heme b + (2E,6E)-farnesyl diphosphate + H2O = Fe(II)-heme o + diphosphate. It participates in porphyrin-containing compound metabolism; heme O biosynthesis; heme O from protoheme: step 1/1. Converts heme B (protoheme IX) to heme O by substitution of the vinyl group on carbon 2 of heme B porphyrin ring with a hydroxyethyl farnesyl side group. The sequence is that of Protoheme IX farnesyltransferase from Mycobacteroides abscessus (strain ATCC 19977 / DSM 44196 / CCUG 20993 / CIP 104536 / JCM 13569 / NCTC 13031 / TMC 1543 / L948) (Mycobacterium abscessus).